Reading from the N-terminus, the 156-residue chain is Cyclic pyranopterin monophosphate synthase (156 aa).

Substrate contacts are provided by residues 75–77 and 111–112; these read LCH and ME. Asp-126 is a catalytic residue.

This sequence belongs to the MoaC family. In terms of assembly, homohexamer; trimer of dimers.

It carries out the reaction (8S)-3',8-cyclo-7,8-dihydroguanosine 5'-triphosphate = cyclic pyranopterin phosphate + diphosphate. It functions in the pathway cofactor biosynthesis; molybdopterin biosynthesis. Functionally, catalyzes the conversion of (8S)-3',8-cyclo-7,8-dihydroguanosine 5'-triphosphate to cyclic pyranopterin monophosphate (cPMP). The chain is Cyclic pyranopterin monophosphate synthase from Caulobacter sp. (strain K31).